The sequence spans 203 residues: Urease accessory protein UreG (203 aa).

14-21 provides a ligand contact to GTP; sequence GPVGSGKT.

It belongs to the SIMIBI class G3E GTPase family. UreG subfamily. In terms of assembly, homodimer. UreD, UreF and UreG form a complex that acts as a GTP-hydrolysis-dependent molecular chaperone, activating the urease apoprotein by helping to assemble the nickel containing metallocenter of UreC. The UreE protein probably delivers the nickel.

Its subcellular location is the cytoplasm. In terms of biological role, facilitates the functional incorporation of the urease nickel metallocenter. This process requires GTP hydrolysis, probably effectuated by UreG. This chain is Urease accessory protein UreG, found in Rhizobium leguminosarum bv. viciae.